Here is a 251-residue protein sequence, read N- to C-terminus: UDP-N-acetylglucosamine--dolichyl-phosphate N-acetylglucosaminyltransferase (251 aa).

A helical membrane pass occupies residues V150–V167.

The protein belongs to the glycosyltransferase 2 family.

Its subcellular location is the cell membrane. The enzyme catalyses a di-trans,poly-cis-dolichyl phosphate + UDP-N-acetyl-alpha-D-glucosamine = an N-acetyl-alpha-D-glucosaminyl-phospho-di-trans,poly-cis-dolichol + UDP. It functions in the pathway cell surface structure biogenesis; S-layer biogenesis. Its pathway is protein modification; protein glycosylation. Involved in the assembly of an N-linked disaccharide that decorates the S-layer glycoprotein and flagellins. AglK initiates N-linked glycosylation through the formation of alpha-linked dolichyl monophosphate N-acetylglucosamine. It catalyzes the transfer of GlcNAc from the donor substrate UDP-GlcNAc to dolichyl phosphate C55 (Dol-P) to yield Dol-P-GlcNAc. AglK reaction proceeds with retention of stereochemistry. The reaction is specific for UDP-GlcNAc. AglK shows a stronger preference for short dolichol (C55-60 Dol-P) substrates compared with the longer (C85-105 Dol-P). This chain is UDP-N-acetylglucosamine--dolichyl-phosphate N-acetylglucosaminyltransferase, found in Methanococcus voltae.